The chain runs to 183 residues: TATA-box-binding protein (183 aa).

2 tandem repeats follow at residues 7 to 83 and 99 to 177.

It belongs to the TBP family.

Functionally, general factor that plays a role in the activation of archaeal genes transcribed by RNA polymerase. Binds specifically to the TATA box promoter element which lies close to the position of transcription initiation. The sequence is that of TATA-box-binding protein from Methanothrix thermoacetophila (strain DSM 6194 / JCM 14653 / NBRC 101360 / PT) (Methanosaeta thermophila).